The primary structure comprises 469 residues: 3-isopropylmalate dehydratase large subunit (469 aa).

[4Fe-4S] cluster-binding residues include C350, C410, and C413.

This sequence belongs to the aconitase/IPM isomerase family. LeuC type 1 subfamily. As to quaternary structure, heterodimer of LeuC and LeuD. The cofactor is [4Fe-4S] cluster.

It catalyses the reaction (2R,3S)-3-isopropylmalate = (2S)-2-isopropylmalate. It functions in the pathway amino-acid biosynthesis; L-leucine biosynthesis; L-leucine from 3-methyl-2-oxobutanoate: step 2/4. Functionally, catalyzes the isomerization between 2-isopropylmalate and 3-isopropylmalate, via the formation of 2-isopropylmaleate. This is 3-isopropylmalate dehydratase large subunit from Rhizobium meliloti (strain 1021) (Ensifer meliloti).